The primary structure comprises 139 residues: Small ribosomal subunit protein uS12 (139 aa).

Disordered stretches follow at residues 1-22 and 37-57; these read MPTI…SKSP and KTPS…TPKK. Basic residues predominate over residues 9–19; it reads RKGRKSHKGKS. Asp102 carries the post-translational modification 3-methylthioaspartic acid.

This sequence belongs to the universal ribosomal protein uS12 family. As to quaternary structure, part of the 30S ribosomal subunit. Contacts proteins S8 and S17. May interact with IF1 in the 30S initiation complex.

With S4 and S5 plays an important role in translational accuracy. Functionally, interacts with and stabilizes bases of the 16S rRNA that are involved in tRNA selection in the A site and with the mRNA backbone. Located at the interface of the 30S and 50S subunits, it traverses the body of the 30S subunit contacting proteins on the other side and probably holding the rRNA structure together. The combined cluster of proteins S8, S12 and S17 appears to hold together the shoulder and platform of the 30S subunit. The chain is Small ribosomal subunit protein uS12 from Limosilactobacillus reuteri (strain DSM 20016) (Lactobacillus reuteri).